Consider the following 1522-residue polypeptide: Paired amphipathic helix protein pst1 (1522 aa).

The interval 139-174 (TILSSTDSNIPRPGTVKSSASPFVPNQNPSAPPPPP) is disordered. The PAH 1 domain occupies 178–248 (RQLNVTDALS…QGFNTFLPPG (71 aa)). The tract at residues 307–339 (QSSASHPVLQPPAPSTLQFNPSPSPAAPSYPPV) is disordered. Over residues 328-337 (SPSPAAPSYP) the composition is skewed to pro residues. The PAH 2 domain maps to 345–415 (QAADLDQAIN…EEFKRFLPDV (71 aa)). Disordered regions lie at residues 422–504 (ETQD…AFNV), 928–968 (AREN…DESS), and 1343–1522 (SGKA…KDDL). Over residues 426–441 (KSTVVPQESATATPKR) the composition is skewed to polar residues. Ser-442 bears the Phosphoserine mark. Residues 442 to 468 (SPSATPTSALPPIGKFAPPTTAKAQPA) are compositionally biased toward low complexity. Thr-446 is modified (phosphothreonine). The PAH 3 domain maps to 504-576 (VPIAQNKNPS…NWLKDLVKYN (73 aa)). Positions 928–960 (ARENRSSVKEDYVSESTERTPDASEIDEHISEH) are enriched in basic and acidic residues. Over residues 1385-1398 (GKSSVTRGNKTNLK) the composition is skewed to polar residues. Positions 1403–1432 (RNNDDSSNKINLSEKEKEKESIEDEEKNRE) are enriched in basic and acidic residues. Residue Ser-1443 is modified to Phosphoserine. The span at 1461-1474 (TSSHRPERSSEKKS) shows a compositional bias: basic and acidic residues. Residues 1478 to 1487 (VFTSVKQTAE) are compositionally biased toward polar residues. The span at 1488 to 1522 (NDADNEDDKTDMDDQTEETLDADNTMEEEPSKDDL) shows a compositional bias: acidic residues.

The protein resides in the nucleus. Its function is as follows. Has a role in modulating the nuclear import of TF1 virus-like particles. Essential for viability. The polypeptide is Paired amphipathic helix protein pst1 (pst1) (Schizosaccharomyces pombe (strain 972 / ATCC 24843) (Fission yeast)).